The sequence spans 206 residues: ATP-dependent Clp protease proteolytic subunit 1 (206 aa).

Catalysis depends on Ser103, which acts as the Nucleophile. His128 is an active-site residue.

The protein belongs to the peptidase S14 family. In terms of assembly, fourteen ClpP subunits assemble into 2 heptameric rings which stack back to back to give a disk-like structure with a central cavity, resembling the structure of eukaryotic proteasomes.

The protein localises to the cytoplasm. The enzyme catalyses Hydrolysis of proteins to small peptides in the presence of ATP and magnesium. alpha-casein is the usual test substrate. In the absence of ATP, only oligopeptides shorter than five residues are hydrolyzed (such as succinyl-Leu-Tyr-|-NHMec, and Leu-Tyr-Leu-|-Tyr-Trp, in which cleavage of the -Tyr-|-Leu- and -Tyr-|-Trp bonds also occurs).. Cleaves peptides in various proteins in a process that requires ATP hydrolysis. Has a chymotrypsin-like activity. Plays a major role in the degradation of misfolded proteins. The polypeptide is ATP-dependent Clp protease proteolytic subunit 1 (Protochlamydia amoebophila (strain UWE25)).